Here is a 470-residue protein sequence, read N- to C-terminus: Chromosomal replication initiator protein DnaA (470 aa).

The interval 1–68 is domain I, interacts with DnaA modulators; that stretch reads MENFWSLCLG…SALAEEVLST (68 aa). The domain II stretch occupies residues 68 to 133; it reads TPVQIELALY…KKPKTLTETS (66 aa). The tract at residues 134–350 is domain III, AAA+ region; sequence GLNPAFRFDN…GALNRIIAMA (217 aa). Residues glycine 178, glycine 180, lysine 181, and threonine 182 each coordinate ATP. The segment at 351–470 is domain IV, binds dsDNA; that stretch reads NFTGHAIDVS…IAVLIQVIRD (120 aa).

It belongs to the DnaA family. As to quaternary structure, oligomerizes as a right-handed, spiral filament on DNA at oriC.

It localises to the cytoplasm. In terms of biological role, plays an essential role in the initiation and regulation of chromosomal replication. ATP-DnaA binds to the origin of replication (oriC) to initiate formation of the DNA replication initiation complex once per cell cycle. Binds the DnaA box (a 9 base pair repeat at the origin) and separates the double-stranded (ds)DNA. Forms a right-handed helical filament on oriC DNA; dsDNA binds to the exterior of the filament while single-stranded (ss)DNA is stabiized in the filament's interior. The ATP-DnaA-oriC complex binds and stabilizes one strand of the AT-rich DNA unwinding element (DUE), permitting loading of DNA polymerase. After initiation quickly degrades to an ADP-DnaA complex that is not apt for DNA replication. Binds acidic phospholipids. This is Chromosomal replication initiator protein DnaA from Methylobacillus flagellatus (strain ATCC 51484 / DSM 6875 / VKM B-1610 / KT).